The sequence spans 347 residues: Putative phosphoesterase 078R (347 aa).

Residues D52, N87, and H211 each coordinate a divalent metal cation.

Belongs to the metallophosphoesterase superfamily. IIV-6 244L family.

In Invertebrate iridescent virus 3 (IIV-3), this protein is Putative phosphoesterase 078R.